The sequence spans 62 residues: Defensin BmKDfsin5 (62 aa).

The N-terminal stretch at methionine 1–alanine 24 is a signal peptide. Cystine bridges form between cysteine 28–cysteine 49, cysteine 35–cysteine 57, and cysteine 39–cysteine 59.

Belongs to the invertebrate defensin family. Type 2 subfamily. As to expression, highly expressed in non-venom gland (hemolymph) and moderately expressed in venom gland.

It localises to the secreted. In terms of biological role, antibacterial peptide active against Gram-positive bacteria (including S.aureus ATCC25923 (MIC=2.5 uM), M.luteus AB93113 (MIC=2.5 uM), and the antibiotic-resistant S.epidermidis PRSE P1389 (MIC=1.25 uM)), but not against Gram-negative bacteria (including E.coli and P.aeruginosa). Also has weak blocking activity on Kv1.1/KCNA1 (8.7% inhibition), Kv1.2/KCNA2 (10.2% inhibition), Kv1.3/KCNA3 (9.0% inhibition), KCa3.1/KCNN4/IK (9.1% inhibition), KCa2.3/KCNN3/SK3 (46.3% inhibition) and Kv11.1/KCNH2/ERG1 (16.9% inhibition) channels (tested at 1 uM). It inhibits potassium channel current by interacting with the pore region. This chain is Defensin BmKDfsin5, found in Olivierus martensii (Manchurian scorpion).